Reading from the N-terminus, the 177-residue chain is Large ribosomal subunit protein uL6 (177 aa).

Belongs to the universal ribosomal protein uL6 family. As to quaternary structure, part of the 50S ribosomal subunit.

Functionally, this protein binds to the 23S rRNA, and is important in its secondary structure. It is located near the subunit interface in the base of the L7/L12 stalk, and near the tRNA binding site of the peptidyltransferase center. The polypeptide is Large ribosomal subunit protein uL6 (Dinoroseobacter shibae (strain DSM 16493 / NCIMB 14021 / DFL 12)).